The chain runs to 298 residues: Glutamyl-Q tRNA(Asp) synthetase (298 aa).

Residues 8 to 12 (RFAPS) and Glu-44 contribute to the L-glutamate site. A 'HIGH' region motif is present at residues 11-21 (PSPTGPLHFGS). Cys-100, Cys-102, Tyr-123, and Cys-127 together coordinate Zn(2+). Tyr-183 and Arg-201 together coordinate L-glutamate. Positions 239-243 (KLSKQ) match the 'KMSKS' region motif. Lys-242 contributes to the ATP binding site.

This sequence belongs to the class-I aminoacyl-tRNA synthetase family. GluQ subfamily. Requires Zn(2+) as cofactor.

In terms of biological role, catalyzes the tRNA-independent activation of glutamate in presence of ATP and the subsequent transfer of glutamate onto a tRNA(Asp). Glutamate is transferred on the 2-amino-5-(4,5-dihydroxy-2-cyclopenten-1-yl) moiety of the queuosine in the wobble position of the QUC anticodon. This Burkholderia cenocepacia (strain ATCC BAA-245 / DSM 16553 / LMG 16656 / NCTC 13227 / J2315 / CF5610) (Burkholderia cepacia (strain J2315)) protein is Glutamyl-Q tRNA(Asp) synthetase.